The primary structure comprises 968 residues: RNA polymerase-associated protein RapA (968 aa).

The Helicase ATP-binding domain occupies 164–334 (DVGRRHAPRV…FARLRLLDPN (171 aa)). 177–184 (DEVGLGKT) is a binding site for ATP. A DEAH box motif is present at residues 280–283 (DEAH). Residues 490-662 (RVEWLMGYLT…YLASPDQTEG (173 aa)) form the Helicase C-terminal domain.

This sequence belongs to the SNF2/RAD54 helicase family. RapA subfamily. As to quaternary structure, interacts with the RNAP. Has a higher affinity for the core RNAP than for the holoenzyme. Its ATPase activity is stimulated by binding to RNAP.

In terms of biological role, transcription regulator that activates transcription by stimulating RNA polymerase (RNAP) recycling in case of stress conditions such as supercoiled DNA or high salt concentrations. Probably acts by releasing the RNAP, when it is trapped or immobilized on tightly supercoiled DNA. Does not activate transcription on linear DNA. Probably not involved in DNA repair. This is RNA polymerase-associated protein RapA from Escherichia coli O139:H28 (strain E24377A / ETEC).